Reading from the N-terminus, the 215-residue chain is MRTGIIAQKIGMTSVFNDKGERISLTLVKVDDCQVVGHKTLEKHGYNALVIGVKDKKISRVTKPMRQVFANAKISPKTKLKEFRISEENFIDIAASLEVDHFTAGQFVDITATTIGKGFAGSMKRHNFRGLEASHGVSISHRSHGSTGQRQDPGKVFKGKKMAGHMGCNQVTIQNLKIFAVDKERKLIMIQGSIPGHKNSYLSVKDAIKKISITV.

The tract at residues 136 to 155 (GVSISHRSHGSTGQRQDPGK) is disordered. Q151 carries the post-translational modification N5-methylglutamine.

It belongs to the universal ribosomal protein uL3 family. In terms of assembly, part of the 50S ribosomal subunit. Forms a cluster with proteins L14 and L19. Methylated by PrmB.

One of the primary rRNA binding proteins, it binds directly near the 3'-end of the 23S rRNA, where it nucleates assembly of the 50S subunit. This is Large ribosomal subunit protein uL3 from Rickettsia rickettsii (strain Iowa).